The chain runs to 105 residues: Small ribosomal subunit protein uS10 (105 aa).

It belongs to the universal ribosomal protein uS10 family. Part of the 30S ribosomal subunit.

In terms of biological role, involved in the binding of tRNA to the ribosomes. The protein is Small ribosomal subunit protein uS10 of Rickettsia prowazekii (strain Madrid E).